The chain runs to 967 residues: A disintegrin and metalloproteinase with thrombospondin motifs 1 (967 aa).

An N-terminal signal peptide occupies residues 1–54 (MQPEVPLGSGKLKPCSDMGDIQRAAKFRSSQSAHMLLLLLASITMLLCVRGAHG). A propeptide spanning residues 55 to 252 (RPTEEDEELV…TGPGSIRKKR (198 aa)) is cleaved from the precursor. The interval 198–252 (RGSGGAKCGVMDEETLPTSNSGRESQNTPDQWPLRNPTPQGAGKPTGPGSIRKKR) is disordered. The Cysteine switch signature appears at 203–210 (AKCGVMDE). Cysteine 205 provides a ligand contact to Zn(2+). Over residues 213–227 (LPTSNSGRESQNTPD) the composition is skewed to polar residues. The Peptidase M12B domain maps to 258–467 (RYVETMLVAD…GHGECLMDKP (210 aa)). The Ca(2+) site is built by glutamate 261, aspartate 344, and aspartate 351. 4 cysteine pairs are disulfide-bonded: cysteine 333–cysteine 385, cysteine 362–cysteine 367, cysteine 379–cysteine 462, and cysteine 417–cysteine 446. Histidine 401 provides a ligand contact to Zn(2+). Residue glutamate 402 is part of the active site. Residues histidine 405 and histidine 411 each contribute to the Zn(2+) site. Residues cysteine 462 and aspartate 465 each coordinate Ca(2+). Positions 476–558 (DLPGTLYDAN…TDMKHFATPV (83 aa)) constitute a Disintegrin domain. 4 disulfides stabilise this stretch: cysteine 488–cysteine 511, cysteine 499–cysteine 521, cysteine 506–cysteine 540, and cysteine 534–cysteine 545. An N-linked (GlcNAc...) asparagine glycan is attached at asparagine 547. Positions 559–614 (HGSWGPWGPWGDCSRTCGGGVQYTMRECDNPVPKNGGKYCEGKRVRYRSCNIEDCP) constitute a TSP type-1 1 domain. 3 disulfides stabilise this stretch: cysteine 571-cysteine 608, cysteine 575-cysteine 613, and cysteine 586-cysteine 598. Asparagine 720, asparagine 764, and asparagine 782 each carry an N-linked (GlcNAc...) asparagine glycan. The interval 725–857 (KKISGTVTST…PFNAIPTFSE (133 aa)) is spacer. TSP type-1 domains lie at 854-910 (TFSE…LPCP) and 911-967 (RWQV…TQCS). Residue asparagine 945 is glycosylated (N-linked (GlcNAc...) asparagine).

Zn(2+) is required as a cofactor. Post-translationally, the precursor is cleaved by a furin endopeptidase. In terms of processing, glycosylated. Can be O-fucosylated by POFUT2 on a serine or a threonine residue found within the consensus sequence C1-X(2)-(S/T)-C2-G of the TSP type-1 repeat domains where C1 and C2 are the first and second cysteine residue of the repeat, respectively. Fucosylated repeats can then be further glycosylated by the addition of a beta-1,3-glucose residue by the glucosyltransferase, B3GALTL. Fucosylation mediates the efficient secretion of ADAMTS family members. Can also be C-glycosylated with one or two mannose molecules on tryptophan residues within the consensus sequence W-X-X-W of the TPRs, and N-glycosylated. These other glycosylations can also facilitate secretion.

The protein resides in the secreted. It is found in the extracellular space. The protein localises to the extracellular matrix. Functionally, metalloprotease which cleaves aggrecan, a cartilage proteoglycan, at the '1683-Glu-|-Leu-1684' site (within the chondroitin sulfate attachment domain), and may be involved in its turnover. Also cleaves COMP. Has angiogenic inhibitor activity. May play a critical role in follicular rupture. The polypeptide is A disintegrin and metalloproteinase with thrombospondin motifs 1 (Adamts1) (Rattus norvegicus (Rat)).